A 159-amino-acid chain; its full sequence is Growth arrest and DNA damage-inducible protein GADD45 gamma (159 aa).

The segment at 43–86 (VYESAKVLNVDPDNVTFCVLAADEEDEGDIALQIHFTLIQAFCC) is homodimerization.

It belongs to the GADD45 family. As to quaternary structure, undergoes concentration-dependent homodimerization, which is required for growth inhibititory activity and enhances interaction with PCNA. Interacts with GADD45GIP1. Interacts with PCNA.

Its function is as follows. Involved in the regulation of growth and apoptosis. Mediates activation of stress-responsive MTK1/MEKK4 MAPKKK. This chain is Growth arrest and DNA damage-inducible protein GADD45 gamma (Gadd45g), found in Rattus norvegicus (Rat).